We begin with the raw amino-acid sequence, 346 residues long: Ribosomal RNA small subunit methyltransferase H (346 aa).

S-adenosyl-L-methionine contacts are provided by residues 46-48, D63, F90, D113, and Q120; that span reads GGY. Residues 270–346 form a disordered region; that stretch reads GGSAGSRHMP…LPETNELARS (77 aa).

It belongs to the methyltransferase superfamily. RsmH family.

The protein resides in the cytoplasm. The catalysed reaction is cytidine(1402) in 16S rRNA + S-adenosyl-L-methionine = N(4)-methylcytidine(1402) in 16S rRNA + S-adenosyl-L-homocysteine + H(+). In terms of biological role, specifically methylates the N4 position of cytidine in position 1402 (C1402) of 16S rRNA. This is Ribosomal RNA small subunit methyltransferase H from Brucella abortus (strain S19).